The following is a 175-amino-acid chain: MAILTWKLRWSTEEALSISSTGTAEHTRPANSTPRTDNSTKAIPCTPPPRKRARVYSTDQQPHSTSDPVGCDNDRHISDDNNKNQGRHTSSGDTTPIVHFKGEPNTLKCFRQRIQKYKHLFEQASSTWHWACVPGTTKNRGIVTLTYSSVEQRQQFLVTVRIPPSISMSLGVMSL.

Positions 15–98 (ALSISSTGTA…TSSGDTTPIV (84 aa)) are disordered. Polar residues-rich tracts occupy residues 17–41 (SISS…NSTK) and 57–67 (STDQQPHSTSD). Residues 72–82 (DNDRHISDDNN) show a composition bias toward basic and acidic residues. A compositionally biased stretch (polar residues) spans 83–94 (KNQGRHTSSGDT).

This sequence belongs to the papillomaviridae E8^E2C protein family.

The protein localises to the host nucleus. Plays a role in limiting the replication of viral DNA in keratinocytes. Recruits the host NCoR/SMRT complex to viral replication foci to mediate repression of both viral replication and transcription. The chain is Protein E8^E2C from Human papillomavirus type 54.